Consider the following 630-residue polypeptide: tRNA uridine 5-carboxymethylaminomethyl modification enzyme MnmG (630 aa).

13–18 (GGGHAG) is a binding site for FAD. Residue 273–287 (GPRYCPSIEDKIHRF) participates in NAD(+) binding.

The protein belongs to the MnmG family. In terms of assembly, homodimer. Heterotetramer of two MnmE and two MnmG subunits. It depends on FAD as a cofactor.

The protein resides in the cytoplasm. Its function is as follows. NAD-binding protein involved in the addition of a carboxymethylaminomethyl (cmnm) group at the wobble position (U34) of certain tRNAs, forming tRNA-cmnm(5)s(2)U34. The protein is tRNA uridine 5-carboxymethylaminomethyl modification enzyme MnmG of Pseudomonas putida (strain W619).